The primary structure comprises 400 residues: Probable peptidoglycan glycosyltransferase FtsW (400 aa).

Residues 1–24 (MSTGSLPLGLPSRDSLDGLRNSVD) are Cytoplasmic-facing. The helical transmembrane segment at 25 to 45 (LPLLAAAALLLGLGLIMVASA) threads the bilayer. The Periplasmic segment spans residues 46 to 63 (SMDLGERYYGNTWHFFQR). Residues 64-84 (QVLFAAIGLALATVMWAIPLE) form a helical membrane-spanning segment. Residues 85–88 (RWER) lie on the Cytoplasmic side of the membrane. A helical transmembrane segment spans residues 89-109 (AGPWLLILVMVLLIAVLLPGV). Residues 110–118 (GRTVNGATR) lie on the Periplasmic side of the membrane. The helical transmembrane segment at 119–139 (WIPIGMFNLQVAEPVKLLVVM) threads the bilayer. Topologically, residues 140 to 153 (YLAGYIVRHYSALR) are cytoplasmic. The helical transmembrane segment at 154 to 174 (LHLRGFVRPLVVLGFGTVLLL) threads the bilayer. Topologically, residues 175 to 177 (LQP) are periplasmic. Residues 178–198 (DFGGAAIMLAIGMGMLFLAGA) traverse the membrane as a helical segment. K199 is a topological domain (cytoplasmic). The helical transmembrane segment at 200 to 220 (LWQFAALGATIAVGMAFVAVA) threads the bilayer. The Periplasmic portion of the chain corresponds to 221-278 (APYRVARLTAFLDPWQDPFATGFQLTQSLIAIGSGGWFGTGLGNSVQKLFYLPEAHND). Residues 279–299 (FLFAVFAEEFGFIGVLALIAL) traverse the membrane as a helical segment. Residues 300 to 324 (FAVVVWRCVKIGLWAERAGHAFGSH) are Cytoplasmic-facing. The chain crosses the membrane as a helical span at residues 325 to 345 (LAFGVAIWLALQSALNLAVNM). Topologically, residues 346 to 354 (GLLPTKGMT) are periplasmic. Residues 355 to 375 (LPFLSYGGSSLIVTLMAIGLV) form a helical membrane-spanning segment. The Cytoplasmic portion of the chain corresponds to 376–400 (MRVYREAQIPAPRQSTPPRRKRGQA).

This sequence belongs to the SEDS family. FtsW subfamily.

Its subcellular location is the cell inner membrane. It carries out the reaction [GlcNAc-(1-&gt;4)-Mur2Ac(oyl-L-Ala-gamma-D-Glu-L-Lys-D-Ala-D-Ala)](n)-di-trans,octa-cis-undecaprenyl diphosphate + beta-D-GlcNAc-(1-&gt;4)-Mur2Ac(oyl-L-Ala-gamma-D-Glu-L-Lys-D-Ala-D-Ala)-di-trans,octa-cis-undecaprenyl diphosphate = [GlcNAc-(1-&gt;4)-Mur2Ac(oyl-L-Ala-gamma-D-Glu-L-Lys-D-Ala-D-Ala)](n+1)-di-trans,octa-cis-undecaprenyl diphosphate + di-trans,octa-cis-undecaprenyl diphosphate + H(+). Its pathway is cell wall biogenesis; peptidoglycan biosynthesis. In terms of biological role, peptidoglycan polymerase that is essential for cell division. The polypeptide is Probable peptidoglycan glycosyltransferase FtsW (Thioalkalivibrio sp. (strain K90mix)).